Reading from the N-terminus, the 197-residue chain is Protein SPMIP2 (197 aa).

Residues 161-197 are disordered; that stretch reads SKAALPIGSRPPKLPKLPKKEEKSKFRPLHQHDARCY. The segment covering 178–197 has biased composition (basic and acidic residues); it reads PKKEEKSKFRPLHQHDARCY.

The sequence is that of Protein SPMIP2 (SPMIP2) from Bos taurus (Bovine).